Consider the following 401-residue polypeptide: Argininosuccinate synthase (401 aa).

Residues 10-18 (AYSGGVDTS) and A38 contribute to the ATP site. Position 89 (Y89) interacts with L-citrulline. Residue G119 participates in ATP binding. Positions 121, 125, and 126 each coordinate L-aspartate. Residue N125 coordinates L-citrulline. R129, S177, S186, E262, and Y274 together coordinate L-citrulline.

Belongs to the argininosuccinate synthase family. Type 1 subfamily. In terms of assembly, homotetramer.

The protein localises to the cytoplasm. It catalyses the reaction L-citrulline + L-aspartate + ATP = 2-(N(omega)-L-arginino)succinate + AMP + diphosphate + H(+). It functions in the pathway amino-acid biosynthesis; L-arginine biosynthesis; L-arginine from L-ornithine and carbamoyl phosphate: step 2/3. In Prochlorococcus marinus (strain MIT 9313), this protein is Argininosuccinate synthase.